The following is a 230-amino-acid chain: Ion-translocating oxidoreductase complex subunit E (230 aa).

Transmembrane regions (helical) follow at residues 39 to 59, 69 to 89, 93 to 113, 125 to 145, and 182 to 202; these read LGLGIATLLVLVGSNVTVSLI, IPVFVMIIASLVTCVQLLMNA, GLYLSLGIFIPLIVTNCIIIG, LPAALDGFWMGMGMTTVLVVL, and SFLLALLPPGAFIGVGLLIAL.

Belongs to the NqrDE/RnfAE family. As to quaternary structure, the complex is composed of six subunits: RnfA, RnfB, RnfC, RnfD, RnfE and RnfG.

Its subcellular location is the cell inner membrane. Its function is as follows. Part of a membrane-bound complex that couples electron transfer with translocation of ions across the membrane. The chain is Ion-translocating oxidoreductase complex subunit E from Vibrio vulnificus (strain YJ016).